Reading from the N-terminus, the 193-residue chain is Ribosomal RNA large subunit methyltransferase E (193 aa).

S-adenosyl-L-methionine contacts are provided by Gly-49, Phe-51, Asp-69, Asp-86, and Asp-106. Lys-146 serves as the catalytic Proton acceptor.

Belongs to the class I-like SAM-binding methyltransferase superfamily. RNA methyltransferase RlmE family.

The protein localises to the cytoplasm. It catalyses the reaction uridine(2552) in 23S rRNA + S-adenosyl-L-methionine = 2'-O-methyluridine(2552) in 23S rRNA + S-adenosyl-L-homocysteine + H(+). Functionally, specifically methylates the uridine in position 2552 of 23S rRNA at the 2'-O position of the ribose in the fully assembled 50S ribosomal subunit. In Brachyspira hyodysenteriae (strain ATCC 49526 / WA1), this protein is Ribosomal RNA large subunit methyltransferase E.